A 474-amino-acid chain; its full sequence is PTS system N-acetylmuramic acid-specific EIIBC component (474 aa).

The PTS EIIB type-1 domain maps to 1-89 (MAKEISSELL…SELLGDAPVQ (89 aa)). The Cytoplasmic segment spans residues 1–123 (MAKEISSELL…LAKFATIFTP (123 aa)). The active-site Phosphocysteine intermediate; for EIIB activity is the Cys29. In terms of domain architecture, PTS EIIC type-1 spans 115–474 (AKFATIFTPL…LFGCRNVNLD (360 aa)). Residues 124–144 (LIPGFIAAGLLLGIATLIATV) traverse the membrane as a helical segment. At 145–157 (MHVPADAQGTLPD) the chain is on the periplasmic side. Residues 158–178 (ALNFMKVFSKGLFTFLVILVG) form a helical membrane-spanning segment. Residues 179–180 (YN) lie on the Cytoplasmic side of the membrane. A helical transmembrane segment spans residues 181 to 201 (AAQAFGGTGVNGAIIAALFLL). The Periplasmic segment spans residues 202 to 217 (GYNPAATTGYYAGFHD). Residues 218 to 238 (FFGLPIDPRGNIIGVLIAAWA) traverse the membrane as a helical segment. The Cytoplasmic portion of the chain corresponds to 239–260 (CARIEGMVRRFMPDDLDMLLTS). A helical transmembrane segment spans residues 261–281 (LITLLITATLAYLIIMPLGGW). Over 282–301 (LFEGMSWLFMHLNSNPFGCA) the chain is Periplasmic. Residues 302–322 (VLAGLFLIAVVFGVHQGFIPV) form a helical membrane-spanning segment. The Cytoplasmic segment spans residues 323 to 334 (YLALMDSQGFNS). The helical transmembrane segment at 335 to 355 (LFPILSMAGAGQVGAALALYW) threads the bilayer. At 356–368 (RAQPHSALRSQVR) the chain is on the periplasmic side. A helical membrane pass occupies residues 369-389 (GAIIPGLLGVGEPLIYGVTLP). Over 390 to 393 (RMKP) the chain is Cytoplasmic. The helical transmembrane segment at 394–414 (FVTACLGGAAGGLFIGLIAWW) threads the bilayer. Topologically, residues 415–440 (GLPMGLNSAFGPSGLVALPLMTSAQG) are periplasmic. Residues 441-461 (ILPAMAVYAGGILVAWVCGFI) traverse the membrane as a helical segment. Topologically, residues 462–474 (FTTLFGCRNVNLD) are cytoplasmic.

The protein resides in the cell inner membrane. The enzyme catalyses N-acetyl-beta-D-muramate(out) + N(pros)-phospho-L-histidyl-[protein] = N-acetyl-beta-D-muramate 6-phosphate(in) + L-histidyl-[protein]. The phosphoenolpyruvate-dependent sugar phosphotransferase system (sugar PTS), a major carbohydrate active transport system, catalyzes the phosphorylation of incoming sugar substrates concomitantly with their translocation across the cell membrane. This system is involved in N-acetylmuramic acid (MurNAc) transport, yielding cytoplasmic MurNAc-6-P. Is also able to take up anhydro-N-acetylmuramic acid (anhMurNAc), but cannot phosphorylate the carbon 6, probably because of the 1,6-anhydro ring. The polypeptide is PTS system N-acetylmuramic acid-specific EIIBC component (murP) (Shigella flexneri).